A 182-amino-acid polypeptide reads, in one-letter code: uncharacterized protein (182 aa).

2 disordered regions span residues 1–49 and 126–171; these read MAAP…DGGS and QGGH…VHAQ. Residues 17–39 show a composition bias toward basic and acidic residues; the sequence is ELLEKAARLERGPPPRGDPEAVG.

This is an uncharacterized protein from Homo sapiens (Human).